The following is a 729-amino-acid chain: Phosphoribosylformylglycinamidine synthase subunit PurL (729 aa).

Residue H54 is part of the active site. Residues Y57 and K96 each contribute to the ATP site. Mg(2+) is bound at residue E98. Residues S99 to H102 and R121 each bind substrate. H100 serves as the catalytic Proton acceptor. D122 is a Mg(2+) binding site. Residue Q245 participates in substrate binding. Residue D273 coordinates Mg(2+). Residue E317–Q319 coordinates substrate. ATP contacts are provided by D495 and G532. Residue N533 participates in Mg(2+) binding. S535 provides a ligand contact to substrate.

Belongs to the FGAMS family. Monomer. Part of the FGAM synthase complex composed of 1 PurL, 1 PurQ and 2 PurS subunits.

The protein resides in the cytoplasm. The catalysed reaction is N(2)-formyl-N(1)-(5-phospho-beta-D-ribosyl)glycinamide + L-glutamine + ATP + H2O = 2-formamido-N(1)-(5-O-phospho-beta-D-ribosyl)acetamidine + L-glutamate + ADP + phosphate + H(+). It functions in the pathway purine metabolism; IMP biosynthesis via de novo pathway; 5-amino-1-(5-phospho-D-ribosyl)imidazole from N(2)-formyl-N(1)-(5-phospho-D-ribosyl)glycinamide: step 1/2. Part of the phosphoribosylformylglycinamidine synthase complex involved in the purines biosynthetic pathway. Catalyzes the ATP-dependent conversion of formylglycinamide ribonucleotide (FGAR) and glutamine to yield formylglycinamidine ribonucleotide (FGAM) and glutamate. The FGAM synthase complex is composed of three subunits. PurQ produces an ammonia molecule by converting glutamine to glutamate. PurL transfers the ammonia molecule to FGAR to form FGAM in an ATP-dependent manner. PurS interacts with PurQ and PurL and is thought to assist in the transfer of the ammonia molecule from PurQ to PurL. This Staphylococcus carnosus (strain TM300) protein is Phosphoribosylformylglycinamidine synthase subunit PurL.